Consider the following 937-residue polypeptide: C-1-tetrahydrofolate synthase, cytoplasmic (937 aa).

The segment at Met1 to Pro309 is methylenetetrahydrofolate dehydrogenase and cyclohydrolase. Residues Tyr50–Lys54 and Val97–Leu99 contribute to the substrate site. Residues Gly168–Ser170 and Ser193 contribute to the NADP(+) site. Pro268–Gly272 lines the substrate pocket. Residues Val310–Ser937 are formyltetrahydrofolate synthetase. Thr374–Ser381 contributes to the ATP binding site.

It in the N-terminal section; belongs to the tetrahydrofolate dehydrogenase/cyclohydrolase family. In the C-terminal section; belongs to the formate--tetrahydrofolate ligase family. In terms of assembly, homodimer.

It localises to the cytoplasm. The enzyme catalyses (6R)-5,10-methylene-5,6,7,8-tetrahydrofolate + NADP(+) = (6R)-5,10-methenyltetrahydrofolate + NADPH. It carries out the reaction (6R)-5,10-methenyltetrahydrofolate + H2O = (6R)-10-formyltetrahydrofolate + H(+). It catalyses the reaction (6S)-5,6,7,8-tetrahydrofolate + formate + ATP = (6R)-10-formyltetrahydrofolate + ADP + phosphate. The protein operates within one-carbon metabolism; tetrahydrofolate interconversion. In Schizosaccharomyces pombe (strain 972 / ATCC 24843) (Fission yeast), this protein is C-1-tetrahydrofolate synthase, cytoplasmic.